A 228-amino-acid chain; its full sequence is UPF0056 membrane protein MJ0972 (228 aa).

A run of 5 helical transmembrane segments spans residues 22–42 (FYIY…LIPI), 68–88 (VVLL…GITI), 133–153 (VPLA…MILI), 163–183 (GVVV…LSLT), and 201–221 (IMGL…IVGL).

It belongs to the UPF0056 (MarC) family.

It is found in the cell membrane. The chain is UPF0056 membrane protein MJ0972 from Methanocaldococcus jannaschii (strain ATCC 43067 / DSM 2661 / JAL-1 / JCM 10045 / NBRC 100440) (Methanococcus jannaschii).